We begin with the raw amino-acid sequence, 686 residues long: MARRSRGEDQDELHCQDTDSDVPEQRDGRCKVKWTQEEDEQLKMLVRHYGQNDWKFLASHFPNRSDQQCQYRWLRVLNPDLVKGPWTKEEDQKVIELVKKYGTKQWTLIAKHLKGRLGKQCRERWHNHLNPEVKKSSWTEEEDRIIFEAHKVLGNRWAEIAKLLPGRTDNAVKNHWNSTIKRKVDTGGFLNETKESQPLYLLVEVDDNESQSGTRAESQTIVPNWPVDISEIKEEDVSDEEVTGLQELPSELPAADLAEHNEEGTPDDVVPEDASASVASPYKWVVEAANYLCPTSVPALNEALDMIESDPDGWCDLTQFDLPEEPSAGSSSSSNSPVRQTPSKPTPSLPNVTEYRLDGHTISDLSKSRKGELIPISPHAEVSFGTPPSVLKRQKKRKISLSPVTENAPSTSLSFLDSCNSMTPKSTPVKTLPFSPSQFLNFWTKQDTLELENPSLTSTPVCSQKVIVTTPLHRDKTPLLQKNSAFVTPDQKYVVDNTPHTPTPFKNALEKYGPIRPLPQTPHLEEDLKEVLRSEAGIELIIEDDVKPHKQKRKQGLRRSPIKKVRKSLALDIVDEDMTQNMPALPKTICFKRTQPVNFLSRSLNLSSSNRKNDSGLLNRAFVQVQSEKMSYRKMPSHFRPPAPMTRAWKAVACGGTQDQLFMQEKARQFLGTLKQSHTSRTLILS.

Positions 1–28 are disordered; it reads MARRSRGEDQDELHCQDTDSDVPEQRDG. HTH myb-type domains lie at 26–77, 78–133, and 134–184; these read RDGR…LRVL, NPDL…NPEV, and KKSS…KRKV. 3 consecutive DNA-binding regions (H-T-H motif) follow at residues 54 to 77, 106 to 129, and 157 to 180; these read WKFL…LRVL, WTLI…HNHL, and WAEI…NSTI. Disordered regions lie at residues 315 to 355 and 493 to 512; these read CDLT…VTEY and YVVD…LEKY. The span at 326-343 shows a compositional bias: low complexity; sequence PSAGSSSSSNSPVRQTPS.

In terms of assembly, component of the DREAM complex. In terms of tissue distribution, expressed in hematopoietic and non hematopoietic cells.

The protein resides in the nucleus. In terms of biological role, represses v-myb- and c-myb-mediated activation of the mim-1 gene, probably by competing with other myb proteins for binding sites. It is an inhibitory member of the myb family. The polypeptide is Myb-related protein B (MYBL2) (Gallus gallus (Chicken)).